The chain runs to 448 residues: Tubulin beta chain (448 aa).

GTP contacts are provided by Gln11, Glu69, Ser138, Gly142, Thr143, Gly144, Asn204, and Asn226. Glu69 is a binding site for Mg(2+). The tract at residues Tyr425–Glu448 is disordered. A compositionally biased stretch (acidic residues) spans Glu432–Glu448.

The protein belongs to the tubulin family. As to quaternary structure, dimer of alpha and beta chains. A typical microtubule is a hollow water-filled tube with an outer diameter of 25 nm and an inner diameter of 15 nM. Alpha-beta heterodimers associate head-to-tail to form protofilaments running lengthwise along the microtubule wall with the beta-tubulin subunit facing the microtubule plus end conferring a structural polarity. Microtubules usually have 13 protofilaments but different protofilament numbers can be found in some organisms and specialized cells. Mg(2+) serves as cofactor.

The protein resides in the cytoplasm. It is found in the cytoskeleton. Functionally, tubulin is the major constituent of microtubules, a cylinder consisting of laterally associated linear protofilaments composed of alpha- and beta-tubulin heterodimers. Microtubules grow by the addition of GTP-tubulin dimers to the microtubule end, where a stabilizing cap forms. Below the cap, tubulin dimers are in GDP-bound state, owing to GTPase activity of alpha-tubulin. The chain is Tubulin beta chain from Aspergillus flavus.